Consider the following 296-residue polypeptide: Aspartate and glycine-rich protein (296 aa).

Residues 1-77 are compositionally biased toward gly residues; the sequence is GDGENGNGNG…GNGNGNGNGN (77 aa). 2 disordered regions span residues 1–219 and 233–296; these read GDGE…DNGG and RARA…YTSY. Acidic residues-rich tracts occupy residues 80-96 and 103-194; these read FDDD…DDWN and NGDD…DDRW. Positions 198–210 are enriched in gly residues; it reads NGNGNGNGNGNGN. Positions 233–243 are enriched in low complexity; that stretch reads RARAAASAAGR. The span at 244 to 259 shows a compositional bias: gly residues; it reads SRGGSGGSGGSGGSGG. The segment covering 270-281 has biased composition (low complexity); the sequence is RAFASARASSGN.

In terms of tissue distribution, component of the acid-soluble and acid-insoluble organic matrix of calcified shell layers (at protein level).

The protein resides in the secreted. This Haliotis asinina (Donkey's ear abalone) protein is Aspartate and glycine-rich protein.